The sequence spans 416 residues: Tumor necrosis factor receptor superfamily member 19 (416 aa).

Residues 1–29 (MALKVLPLHRTVLFAAILFLLHLACKVSC) form the signal peptide. The Extracellular portion of the chain corresponds to 30-170 (ETGDCRQQEF…TVSSPRDTAL (141 aa)). TNFR-Cys repeat units lie at residues 33 to 72 (DCRQQEFKDRSGNCVLCKQCGPGMELSKECGFGYGEDAQC) and 74 to 114 (PCRP…DAVC). 8 disulfides stabilise this stretch: cysteine 34–cysteine 46, cysteine 49–cysteine 62, cysteine 52–cysteine 72, cysteine 75–cysteine 89, cysteine 92–cysteine 106, cysteine 95–cysteine 114, cysteine 117–cysteine 135, and cysteine 138–cysteine 149. A glycan (N-linked (GlcNAc...) asparagine) is linked at asparagine 105. The stretch at 116–149 (DCLPGFYRKTKLVGFQDMECVPCGDPPPPYEPHC) is one TNFR-Cys 3; truncated repeat. Residues 171-191 (AAVICSALATVLLALLILCVI) form a helical membrane-spanning segment. The Cytoplasmic segment spans residues 192–416 (YCKRQFMEKK…LAMPTAFQDA (225 aa)). Residues 321-416 (LCDSYPELTG…LAMPTAFQDA (96 aa)) are disordered. 3 stretches are compositionally biased toward polar residues: residues 331–351 (EDTNSLNPENESAASLDSSGG), 360–370 (LESSGNVSEST), and 381–396 (VWEQTLAQDAQRTPSQ).

Associates with TRAF1, TRAF2, TRAF3 and TRAF5. Interacts with LINGO1. In terms of tissue distribution, highly expressed in adult brain, and in embryos from day 11-17, but not earlier. Detected in embryonic brain and epithelium, and at lower levels in adult heart, lung and liver. In neonatal mice, mainly in hair follicles and neuron-like cells in the cerebellum, but not in the skin epidermis. Isoform 3 was found in embryonic day 17.5 skin but not in brain and liver.

The protein localises to the cell membrane. It is found in the secreted. Can mediate activation of c-Jun and NF-kappa-B. May promote caspase-independent cell death. Isoform 2 and isoform 3 may act as decoy receptors. The protein is Tumor necrosis factor receptor superfamily member 19 (Tnfrsf19) of Mus musculus (Mouse).